Consider the following 233-residue polypeptide: MGRGMQKQRFCLDTSAFTEPSVRKALGVKTVTELTDKVMDLIAEARIKLNISCHIPYPTVYNELMGFLENENCPRDVIVKVDTWLVKKTPNRYEIKIPSEIFYEYVKDLRERINKGMRIGEEHIIKATDMVYELSKKHPEMGKNEIINKVLSKTINTFRNKYRSALRVGTLDSAPDLDVLLLAKELDAAVVASDGGIEKWAQRLGLRFVDASDFPFMLEEYLKHNDRHLRIKY.

The protein belongs to the HARP family.

It carries out the reaction Endonucleolytic cleavage of RNA, removing 5'-extranucleotides from tRNA precursor.. Its function is as follows. RNA-free RNase P that catalyzes the removal of the 5'-leader sequence from pre-tRNA to produce the mature 5'-terminus. This chain is RNA-free ribonuclease P, found in Methanocaldococcus jannaschii (strain ATCC 43067 / DSM 2661 / JAL-1 / JCM 10045 / NBRC 100440) (Methanococcus jannaschii).